The sequence spans 141 residues: Putative antiporter subunit mnhB2 (141 aa).

4 helical membrane passes run 10–30 (SVTK…FFAG), 35–55 (GGGF…FLAF), 70–90 (KLMI…MFFG), and 116–136 (LFEL…MLSI).

Belongs to the CPA3 antiporters (TC 2.A.63) subunit B family. In terms of assembly, may form a heterooligomeric complex that consists of seven subunits: mnhA2, mnhB2, mnhC2, mnhD2, mnhE2, mnhF2 and mnhG2.

It localises to the cell membrane. The sequence is that of Putative antiporter subunit mnhB2 (mnhB2) from Staphylococcus epidermidis (strain ATCC 35984 / DSM 28319 / BCRC 17069 / CCUG 31568 / BM 3577 / RP62A).